Consider the following 312-residue polypeptide: Putative S-adenosyl-L-methionine-dependent methyltransferase BCG_1768c (312 aa).

Residues Asp130 and 159–160 (DL) contribute to the S-adenosyl-L-methionine site.

This sequence belongs to the UPF0677 family.

Functionally, exhibits S-adenosyl-L-methionine-dependent methyltransferase activity. The protein is Putative S-adenosyl-L-methionine-dependent methyltransferase BCG_1768c of Mycobacterium bovis (strain BCG / Pasteur 1173P2).